The following is a 418-amino-acid chain: Putative ion-transport protein YfeO (418 aa).

Transmembrane regions (helical) follow at residues 10-30 (LLLS…LIMV), 54-74 (DSPL…GLVI), 99-119 (ALPG…SLGP), 120-140 (EHPI…RLLP), 149-169 (ILAS…AALI), 186-206 (LFAP…FFHP), 223-243 (ILSG…AVWC), 258-278 (VFVL…GGPV), 300-320 (DYFL…ASGF), 322-342 (GGRI…LHEH), 343-363 (VPAV…VLVV), and 371-391 (LFMA…CIVM).

The protein belongs to the chloride channel (TC 2.A.49) family.

The protein localises to the cell membrane. The polypeptide is Putative ion-transport protein YfeO (Escherichia coli O127:H6 (strain E2348/69 / EPEC)).